Reading from the N-terminus, the 159-residue chain is Ribosomal RNA large subunit methyltransferase H (159 aa).

Residues L76, G108, and 127 to 132 (FGLLTF) each bind S-adenosyl-L-methionine.

It belongs to the RNA methyltransferase RlmH family. As to quaternary structure, homodimer.

It is found in the cytoplasm. It carries out the reaction pseudouridine(1915) in 23S rRNA + S-adenosyl-L-methionine = N(3)-methylpseudouridine(1915) in 23S rRNA + S-adenosyl-L-homocysteine + H(+). Its function is as follows. Specifically methylates the pseudouridine at position 1915 (m3Psi1915) in 23S rRNA. This chain is Ribosomal RNA large subunit methyltransferase H, found in Streptococcus thermophilus (strain CNRZ 1066).